A 293-amino-acid chain; its full sequence is Short-chain dehydrogenase/reductase PhomF (293 aa).

Residues isoleucine 31 and asparagine 102 each coordinate NADP(+). Serine 175 (proton donor) is an active-site residue. Tyrosine 190, lysine 194, and serine 225 together coordinate NADP(+). The active-site Proton acceptor is tyrosine 190. Lysine 194 acts as the Lowers pKa of active site Tyr in catalysis.

This sequence belongs to the short-chain dehydrogenases/reductases (SDR) family.

Its function is as follows. Short-chain dehydrogenase/reductase; part of the gene cluster that mediates the biosynthesis of the phomopsins, a group of hexapeptide mycotoxins which infects lupins and causes lupinosis disease in livestock. The role of phomF within the phomopsins biosynthesis pathway has still to be determined. The pathway starts with the processing of the precursor phomA by several endopeptidases including kexin proteases as well as the cluster-specific S41 family peptidase phomP1 and the oligopeptidase phomG to produce 10 identical copies of the hexapeptide Tyr-Val-Ile-Pro-Ile-Asp. After being excised from the precursor peptide, the core peptides are cyclized and modified post-translationally by enzymes encoded within the gene cluster. The timing and order of proteolysis of the phomA precursor and PTMs are still unknown. Two tyrosinase-like enzymes, phomQ1 and phomQ2, catalyze the chlorination and hydroxylation of Tyr, respectively. PhomYb, is proposed to be involved in the construction of the macrocyclic structure. The other 4 ustYa family proteins may be involved in PTMs that generate the unique structure of phomopsin A. PhomYa is required for the hydroxylation of C-beta of Tyr. PhomYc, phomYd, and phomYe are responsible for the biosynthesis of 2,3-dehydroisoleucine (dIle), 2,3-dehydroaspartic acid (dAsp), and 3,4-dehydroproline (dPro), respectively. While dIle formation by phomYc is indispensable for the installation of dAsp by phomYd, the order of the other PTMs have not been elucidated yet. Most of the biosynthetic enzymes likely have broad substrate specificity, and thus, there might be a metabolic grid from a precursor to phomopsin A. The enzyme(s) responsible for the biosynthesis of 3,4-dehydrovaline (dVal) have also not been identified yet. Finally, phomM acts as an S-adenosylmethionine-dependent alpha-N-methyltransferase that catalyzes two successive N-methylation reactions, converting N-desmethyl-phomopsin A to phomopsin A and phomopsin A further to an N,N-dimethylated congener called phomopsin E. The protein is Short-chain dehydrogenase/reductase PhomF of Diaporthe leptostromiformis (Lupinosis disease fungus).